Here is a 25-residue protein sequence, read N- to C-terminus: M-poneritoxin-Na1b (25 aa).

It belongs to the non-disulfide-bridged peptide (NDBP) superfamily. Medium-length antimicrobial peptide (group 3) family. Ponericin-W subfamily. In terms of tissue distribution, expressed by the venom gland.

Its subcellular location is the secreted. It localises to the target cell membrane. Membrane-perturbating peptide with multiple activities. It is insecticidal, since it induces reversible paralysis in insects (L.cuprina) after 1 hour, but fails to kill flies. It shows a relatively strong and broad-spectrum antibacterial activity against both Gram-positive and Gram-negative bacteria (MIC&lt;20 uM). It is also anthelmintic, since it potently inhibits the larval development of the major pathogenic nematode of ruminants (H.contortus, IC(50)=2.8 uM). Interestingly, only at 10 uM, it increases adult males motility of the other nematode B.malayi for 24 hours post-treatment, followed by a reduction in motility for the rest of the experiment. It shows cytotoxic activity against HEK293 cells (EC(50)=4-6 uM) and induces hemolysis in human erythrocytes (EC(50)=40-62 uM). In addition, it causes an important increase in intracellular calcium concentration on neuronal and epithelial cell lines, which supports a non-specific membrane perturbation mechanism of action. In vivo, it induces pain by intraplantar injection into mice, suggesting a defensive function against vertebrate predators. The protein is M-poneritoxin-Na1b of Neoponera apicalis (Ant).